The chain runs to 253 residues: Imidazole glycerol phosphate synthase subunit HisF (253 aa).

Residues Asp-11 and Asp-130 contribute to the active site.

Belongs to the HisA/HisF family. As to quaternary structure, heterodimer of HisH and HisF.

The protein localises to the cytoplasm. The catalysed reaction is 5-[(5-phospho-1-deoxy-D-ribulos-1-ylimino)methylamino]-1-(5-phospho-beta-D-ribosyl)imidazole-4-carboxamide + L-glutamine = D-erythro-1-(imidazol-4-yl)glycerol 3-phosphate + 5-amino-1-(5-phospho-beta-D-ribosyl)imidazole-4-carboxamide + L-glutamate + H(+). Its pathway is amino-acid biosynthesis; L-histidine biosynthesis; L-histidine from 5-phospho-alpha-D-ribose 1-diphosphate: step 5/9. Its function is as follows. IGPS catalyzes the conversion of PRFAR and glutamine to IGP, AICAR and glutamate. The HisF subunit catalyzes the cyclization activity that produces IGP and AICAR from PRFAR using the ammonia provided by the HisH subunit. In Desulfitobacterium hafniense (strain DSM 10664 / DCB-2), this protein is Imidazole glycerol phosphate synthase subunit HisF.